Consider the following 226-residue polypeptide: Thioredoxin domain-containing protein 9 (226 aa).

The region spanning 52–180 is the Thioredoxin domain; it reads LEALKKAQQQ…TTETLEWRLG (129 aa). Ser188, Ser221, and Ser223 each carry phosphoserine.

As to quaternary structure, forms ternary complexes with the chaperonin TCP1 complex, spanning the cylindrical chaperonin cavity and contacting at least 2 subunits.

It localises to the cytoplasm. Its subcellular location is the nucleus. It is found in the cytoskeleton. The protein localises to the microtubule organizing center. The protein resides in the centrosome. It localises to the midbody. Significantly diminishes the chaperonin TCP1 complex ATPase activity, thus negatively impacts protein folding, including that of actin or tubulin. In Bos taurus (Bovine), this protein is Thioredoxin domain-containing protein 9 (TXNDC9).